Reading from the N-terminus, the 114-residue chain is Small ribosomal subunit protein uS17 (114 aa).

It belongs to the universal ribosomal protein uS17 family. In terms of assembly, part of the 30S ribosomal subunit.

In terms of biological role, one of the primary rRNA binding proteins, it binds specifically to the 5'-end of 16S ribosomal RNA. The chain is Small ribosomal subunit protein uS17 from Sulfolobus acidocaldarius (strain ATCC 33909 / DSM 639 / JCM 8929 / NBRC 15157 / NCIMB 11770).